Consider the following 94-residue polypeptide: Pyrimidine/purine nucleoside phosphorylase (94 aa).

It belongs to the nucleoside phosphorylase PpnP family.

The catalysed reaction is a purine D-ribonucleoside + phosphate = a purine nucleobase + alpha-D-ribose 1-phosphate. It catalyses the reaction adenosine + phosphate = alpha-D-ribose 1-phosphate + adenine. It carries out the reaction cytidine + phosphate = cytosine + alpha-D-ribose 1-phosphate. The enzyme catalyses guanosine + phosphate = alpha-D-ribose 1-phosphate + guanine. The catalysed reaction is inosine + phosphate = alpha-D-ribose 1-phosphate + hypoxanthine. It catalyses the reaction thymidine + phosphate = 2-deoxy-alpha-D-ribose 1-phosphate + thymine. It carries out the reaction uridine + phosphate = alpha-D-ribose 1-phosphate + uracil. The enzyme catalyses xanthosine + phosphate = alpha-D-ribose 1-phosphate + xanthine. Its function is as follows. Catalyzes the phosphorolysis of diverse nucleosides, yielding D-ribose 1-phosphate and the respective free bases. Can use uridine, adenosine, guanosine, cytidine, thymidine, inosine and xanthosine as substrates. Also catalyzes the reverse reactions. The sequence is that of Pyrimidine/purine nucleoside phosphorylase from Vibrio campbellii (strain ATCC BAA-1116).